The sequence spans 425 residues: Serine--tRNA ligase (425 aa).

230–232 (TAE) contributes to the L-serine binding site. 261–263 (RSE) is a binding site for ATP. Residue Glu-284 coordinates L-serine. 348–351 (EISS) contacts ATP. Residue Ser-384 coordinates L-serine.

It belongs to the class-II aminoacyl-tRNA synthetase family. Type-1 seryl-tRNA synthetase subfamily. Homodimer. The tRNA molecule binds across the dimer.

The protein localises to the cytoplasm. The catalysed reaction is tRNA(Ser) + L-serine + ATP = L-seryl-tRNA(Ser) + AMP + diphosphate + H(+). It catalyses the reaction tRNA(Sec) + L-serine + ATP = L-seryl-tRNA(Sec) + AMP + diphosphate + H(+). The protein operates within aminoacyl-tRNA biosynthesis; selenocysteinyl-tRNA(Sec) biosynthesis; L-seryl-tRNA(Sec) from L-serine and tRNA(Sec): step 1/1. Functionally, catalyzes the attachment of serine to tRNA(Ser). Is also able to aminoacylate tRNA(Sec) with serine, to form the misacylated tRNA L-seryl-tRNA(Sec), which will be further converted into selenocysteinyl-tRNA(Sec). This chain is Serine--tRNA ligase, found in Maridesulfovibrio salexigens (strain ATCC 14822 / DSM 2638 / NCIMB 8403 / VKM B-1763) (Desulfovibrio salexigens).